A 130-amino-acid polypeptide reads, in one-letter code: Large ribosomal subunit protein bL20c (130 aa).

The protein belongs to the bacterial ribosomal protein bL20 family.

Its subcellular location is the plastid. It localises to the chloroplast. Binds directly to 23S ribosomal RNA and is necessary for the in vitro assembly process of the 50S ribosomal subunit. It is not involved in the protein synthesizing functions of that subunit. The chain is Large ribosomal subunit protein bL20c from Oenothera argillicola (Appalachian evening primrose).